The sequence spans 254 residues: Vitamin B12 import ATP-binding protein BtuD (254 aa).

Residues 1-239 (MHINHISVGN…ENLQQVFETP (239 aa)) enclose the ABC transporter domain. Position 29–36 (29–36 (GPNGSGKS)) interacts with ATP.

The protein belongs to the ABC transporter superfamily. Vitamin B12 importer (TC 3.A.1.13.1) family. In terms of assembly, the complex is composed of two ATP-binding proteins (BtuD), two transmembrane proteins (BtuC) and a solute-binding protein (BtuF).

It is found in the cell inner membrane. It catalyses the reaction an R-cob(III)alamin(out) + ATP + H2O = an R-cob(III)alamin(in) + ADP + phosphate + H(+). In terms of biological role, part of the ABC transporter complex BtuCDF involved in vitamin B12 import. Responsible for energy coupling to the transport system. This chain is Vitamin B12 import ATP-binding protein BtuD, found in Vibrio vulnificus (strain YJ016).